Consider the following 255-residue polypeptide: Fumarate reductase cytochrome b subunit (255 aa).

5 consecutive transmembrane segments (helical) span residues 33–53 (TGLILALFMIAHMFLVSSILI), 78–98 (IVSVVAAGVILILVAHAFLAL), 126–146 (WFIQALTGFAMFFLASIHLFV), 168–188 (FWLLYIFLLFAVELHGSIGLY), and 208–228 (IKWAMSVFFIVLGLCTYGAYI). Heme b-binding residues include His44, His93, His143, and His182.

It belongs to the diheme cytochrome b FrdC family. Part of an enzyme complex containing three subunits: a flavoprotein (frdA), an iron-sulfur protein (frdB), and diheme cytochrome b (frdC). Heme b is required as a cofactor.

The protein localises to the cell inner membrane. Functionally, the fumarate reductase enzyme complex is required for fumarate respiration. This subunit anchors the complex in the membrane and binds a diheme cytochrome b. The polypeptide is Fumarate reductase cytochrome b subunit (frdC) (Helicobacter pylori (strain J99 / ATCC 700824) (Campylobacter pylori J99)).